A 795-amino-acid chain; its full sequence is RAS guanyl-releasing protein 1 (795 aa).

Residues 1–12 (MGTLGKAREAPR) are compositionally biased toward basic and acidic residues. The disordered stretch occupies residues 1–37 (MGTLGKAREAPRKPCHGSRAGPKARLEAKSTNSPLPA). Positions 53-176 (LGHLAKGASL…HLIDTTQINS (124 aa)) constitute an N-terminal Ras-GEF domain. The tract at residues 57–110 (AKGASLDDLIDSCIQSFDADGNLCRNNQLLQVMLTMHRIIISSAELLQKVMNLY) is ras exchanger motif region; required for transforming activity. Phosphothreonine; by PKC is present on Thr184. The Ras-GEF domain maps to 205-436 (EPEELSEHLT…YELSYAREPR (232 aa)). EF-hand domains are found at residues 470-505 (HVQRMVDSVFKNYDLDQDGYISQEEFEKIAASFPFS) and 506-532 (FCVMDKDREGLISRDEITAYFMRASSI). Ca(2+) is bound by residues Asp483, Asp485, Asp487, Tyr489, and Glu494. The segment at 541-591 (PHNFQETTYLKPTFCDNCAGFLWGVIKQGYRCKDCGMNCHKQCKDLVVFEC) adopts a Phorbol-ester/DAG-type zinc-finger fold. Ser597 is modified (phosphoserine). The segment at 686-694 (TPGHFVLSS) is suppress the PT region-mediated translocation to plasma membrane. A PT region; mediates the BCR-dependent translocation to plasma membrane region spans residues 717–795 (LVRKRAFVKW…LAQMDHGDSA (79 aa)). Positions 738 to 779 (ELHLRLRTYQELEQEINTLKADNDALKIQLKYAQKKIESLQL) form a coiled coil.

Belongs to the RASGRP family. As to quaternary structure, homodimer. Forms a signaling complex with DGKZ and HRAS. Interacts with F-actin. Interacts with SKAP1. As to expression, detected in spleen and thymus. Expressed by mature thymocytes and to a lower extent by bone marrow-derived mast cells (at protein level). Detected in B-cells and keratinocytes (at protein level).

Its subcellular location is the cytoplasm. The protein resides in the cytosol. It is found in the cell membrane. It localises to the golgi apparatus membrane. The protein localises to the endoplasmic reticulum membrane. Autoinhibited. Activated by diacylglycerol and calcium binding, which induces a conformational change releasing the autoinhibitory state. Regulated by DGKA. Regulated by DGKZ. Regulated by PLC gamma and F-actin polymerization. Functions as a calcium- and diacylglycerol (DAG)-regulated nucleotide exchange factor specifically activating Ras through the exchange of bound GDP for GTP. Activates the Erk/MAP kinase cascade. Regulates T-cell/B-cell development, homeostasis and differentiation by coupling T-lymphocyte/B-lymphocyte antigen receptors to Ras. Regulates NK cell cytotoxicity and ITAM-dependent cytokine production by activation of Ras-mediated ERK and JNK pathways. Functions in mast cell degranulation and cytokine secretion, regulating FcERI-evoked allergic responses. May also function in differentiation of other cell types. Proto-oncogene, which promotes T-cell lymphomagenesis when its expression is deregulated. This is RAS guanyl-releasing protein 1 (Rasgrp1) from Mus musculus (Mouse).